The chain runs to 99 residues: Imizoquin biosynthesis cluster protein A (99 aa).

It participates in secondary metabolite biosynthesis. Functionally, part of the gene cluster that mediates the biosynthesis of imizoquins A to D, tripeptide-derived alkaloids that serve a protective role against oxidative stress that are essential for normal germination. ImqB is a canonical three-module NRPS that assembles the tripeptide backbone of the imizoquins via condensation of Trp, Tyr, and Leu-derived precursors. N-methylation by imqF and phenol oxidation by imqC, followed by cyclization via the FAD-dependent oxidase imqH carry out the three-step transformation of L-tyrosine into tetrahydroisoquinoline. Importantly, this sequence requires the presence of a free amine in the tyrosine moiety, indicating that isoquinoline formation occurs prior to peptide bond formation. The imidazolidin-4-one ring of imizoquins could form following additional oxidation of the methyl-derived bridgehead carbon by imqH. Lastly, O-methylation by imqG and leucine hydroxylation by imqE complete biosynthesis of the imizoquins. This Aspergillus flavus (strain ATCC 200026 / FGSC A1120 / IAM 13836 / NRRL 3357 / JCM 12722 / SRRC 167) protein is Imizoquin biosynthesis cluster protein A.